A 144-amino-acid chain; its full sequence is Probable nucleoside diphosphate kinase 5 (144 aa).

ATP is bound by residues K3, F51, R79, T85, R99, and N109. H112 acts as the Pros-phosphohistidine intermediate in catalysis.

Belongs to the NDK family.

It carries out the reaction a 2'-deoxyribonucleoside 5'-diphosphate + ATP = a 2'-deoxyribonucleoside 5'-triphosphate + ADP. The catalysed reaction is a ribonucleoside 5'-diphosphate + ATP = a ribonucleoside 5'-triphosphate + ADP. Its function is as follows. Involved in the synthesis of nucleoside triphosphates other than ATP. The ATP gamma phosphate is transferred to the NDP beta phosphate via a ping-pong mechanism, using a phosphorylated active-site intermediate. This is Probable nucleoside diphosphate kinase 5 from Arabidopsis thaliana (Mouse-ear cress).